A 915-amino-acid polypeptide reads, in one-letter code: Coronin-7 (915 aa).

WD repeat units lie at residues 75 to 115, 124 to 163, 166 to 205, and 209 to 253; these read CHSD…QALP, PEDAQVEVLQFHPTADGVLLSAAGRAVKVWDATKQQPLTE, THGDLVQGAAWSRDGALLGTTCKDKQLRIFDPRAKPEAAQ, and AHEN…AALT. The segment at 396–456 is disordered; sequence TSCLAPPAEL…TSPSQRSLQS (61 aa). 2 stretches are compositionally biased toward low complexity: residues 399-413 and 420-450; these read LAPPAELTPATAQPA and SSTPSSLTSPSTPSSLGPSLTSTSGIGTSPS. Ser453 and Ser456 each carry phosphoserine. Residue Lys463 forms a Glycyl lysine isopeptide (Lys-Gly) (interchain with G-Cter in ubiquitin) linkage. 4 WD repeats span residues 533–573, 583–623, 626–665, and 719–759; these read QNGV…LQEV, GHTE…EQLR, GHRDQIFGLAWSPDGQQLATVCKDGRLRIYEPRGSPEPLQ, and DVAP…PFFL. A disordered region spans residues 850–915; it reads PPGMTPVSQA…FEGVDEDEWD (66 aa). A compositionally biased stretch (low complexity) spans 859 to 869; it reads APREAPARRAP. A compositionally biased stretch (basic and acidic residues) spans 874–886; it reads LEEKSDQQKKEEL. Ser905 is modified (phosphoserine).

It belongs to the WD repeat coronin family. As to quaternary structure, interacts with clathrin adapter AP1 complex. This interaction takes place at Golgi membranes and not AP1-positive endosomal membranes. Interacts (when ubiquitinated at Lys-463) with EPS15. In terms of processing, the membrane-associated form is phosphorylated on tyrosine residues. Ubiquitinated via 'Lys-33'-linked ubiquitin chains by the BCR(KLHL20) E3 ubiquitin ligase complex: 'Lys-33'-linked ubiquitination promotes interaction with EPS15 and facilitates actin polymerization at the trans-Golgi network, thereby facilitating post-Golgi trafficking. Deubiquitinated by ZRANB1/TRABID.

Its subcellular location is the golgi apparatus membrane. The protein resides in the golgi apparatus. It localises to the trans-Golgi network. It is found in the cytoplasmic vesicle. The protein localises to the cytoplasm. Its subcellular location is the cytosol. F-actin regulator involved in anterograde Golgi to endosome transport: upon ubiquitination via 'Lys-33'-linked ubiquitin chains by the BCR(KLHL20) E3 ubiquitin ligase complex, interacts with EPS15 and localizes to the trans-Golgi network, where it promotes actin polymerization, thereby facilitating post-Golgi trafficking. May play a role in the maintenance of the Golgi apparatus morphology. This is Coronin-7 (CORO7) from Bos taurus (Bovine).